A 337-amino-acid chain; its full sequence is Trace amine-associated receptor 5 (337 aa).

At 1-38 (MRAVLLPGSGEQPAAFCYQVNGSCPRTVHPLAIRVLIY) the chain is on the extracellular side. N-linked (GlcNAc...) asparagine glycosylation is present at N21. 2 cysteine pairs are disulfide-bonded: C24–C188 and C99–C192. A helical transmembrane segment spans residues 39-59 (LACAVGMLITVLGNLFVVFAV). Residues 60 to 70 (SYFKVLHTPTN) are Cytoplasmic-facing. Residues 71 to 91 (FLLLSLALADMLLGLLVLPLS) traverse the membrane as a helical segment. Over 92–109 (TVRSVESCWFFGDFLCRL) the chain is Extracellular. Residues 110-130 (HTYLDTLFCLTSIFHLCFISI) traverse the membrane as a helical segment. The Cytoplasmic portion of the chain corresponds to 131-154 (DRHCAICDPLLYPSKFTVRIALRY). Residues 155 to 175 (IAAGWGIPAAYTAFFLYTDVV) traverse the membrane as a helical segment. Positions 176-189 (ERALSQWLEEMPCV) are extracellular Loop 2 (ECL2). Residues 176-204 (ERALSQWLEEMPCVGSCQLLFNKFWGWLN) are Extracellular-facing. Residues 205–225 (FPAFFIPCLIMISLYLKIFVV) traverse the membrane as a helical segment. Over 226–253 (ATRQAQQIRTLSQSLSGAVKRERKAAKT) the chain is Cytoplasmic. A helical transmembrane segment spans residues 254–274 (LGIAVGIYLVCWLPFTVDTLV). At 275-284 (DSLLNFVTPP) the chain is on the extracellular side. The helical transmembrane segment at 285 to 307 (LVFDIFIWFAYFNSACNPIIYVF) threads the bilayer. Topologically, residues 308–337 (SYRWFRKALKLLLSREILSPRTQTADLFHD) are cytoplasmic.

It belongs to the G-protein coupled receptor 1 family.

The protein localises to the cell membrane. Its function is as follows. Olfactory receptor specific for trimethylamine, a trace amine enriched in the urine of male rats, playing a role in social behavior. Also activated by N-methylpiperidine. Trimethylamine is present at high concentration in the urine of male after puberty and acts as an attractant. Trimethylamine-binding causes a conformation change that triggers signaling via G(s)-class of G alpha proteins (GNAL or GNAS). Also required to provide olfactory input into limbic brain areas to regulate emotional behaviors likely via modulation of the serotonin system. In Rattus norvegicus (Rat), this protein is Trace amine-associated receptor 5.